The sequence spans 146 residues: Large ribosomal subunit protein uL15 (146 aa).

The segment at 1–61 (MELNSLKPAA…GGQMPMHRRL (61 aa)) is disordered. The span at 30–39 (TATKGHKGQK) shows a compositional bias: basic residues.

It belongs to the universal ribosomal protein uL15 family. In terms of assembly, part of the 50S ribosomal subunit.

Functionally, binds to the 23S rRNA. In Geotalea uraniireducens (strain Rf4) (Geobacter uraniireducens), this protein is Large ribosomal subunit protein uL15.